A 284-amino-acid chain; its full sequence is Type II methyltransferase M1.LlaDCHI (284 aa).

S-adenosyl-L-methionine contacts are provided by tryptophan 17, lysine 21, aspartate 62, and aspartate 194.

It belongs to the N(4)/N(6)-methyltransferase family.

The enzyme catalyses a 2'-deoxyadenosine in DNA + S-adenosyl-L-methionine = an N(6)-methyl-2'-deoxyadenosine in DNA + S-adenosyl-L-homocysteine + H(+). An alpha subtype methylase, recognizes the double-stranded sequence 5'-GATC-3', methylates A-2 on both strands, and protects the DNA from cleavage by the LlaDCHI endonuclease. This Lactococcus lactis subsp. cremoris (Streptococcus cremoris) protein is Type II methyltransferase M1.LlaDCHI.